Consider the following 358-residue polypeptide: Probable undecaprenyl-phosphate N-acetylglucosaminyl 1-phosphate transferase (358 aa).

11 helical membrane passes run 10–32 (VVAF…RIAI), 53–72 (MGGL…SGIY), 76–93 (RMTA…LGIL), 105–127 (FLIQ…FFSV), 137–157 (GWMA…AINL), 164–181 (LAAG…VMAL), 186–205 (VLIL…FLFY), 218–235 (GSLF…LGLY), 240–262 (LFSI…FAII), 292–311 (MSVL…AIVL), and 316–338 (IWLS…EVTG).

It belongs to the glycosyltransferase 4 family. It depends on Mg(2+) as a cofactor. The cofactor is Mn(2+).

It localises to the cell membrane. It carries out the reaction di-trans,octa-cis-undecaprenyl phosphate + UDP-N-acetyl-alpha-D-glucosamine = N-acetyl-alpha-D-glucosaminyl-di-trans,octa-cis-undecaprenyl diphosphate + UMP. Its pathway is cell wall biogenesis; poly(glucopyranosyl N-acetylgalactosamine 1-phosphate) teichoic acid biosynthesis. The protein operates within cell wall biogenesis; poly(glycerol phosphate) teichoic acid biosynthesis. Catalyzes the formation of undecaprenyl-PP-N-acetylglucosamine. Involved in the synthesis of anionic cell-wall polymers as it mediates the initiation of the linkage unit formation that appears to be common to the two types of teichoic acids attached to the peptidoglycan of B.subtilis; may also be involved in teichuronic acid biosynthesis. This chain is Probable undecaprenyl-phosphate N-acetylglucosaminyl 1-phosphate transferase (tagO), found in Bacillus subtilis (strain 168).